A 647-amino-acid chain; its full sequence is tRNA 5-methylaminomethyl-2-thiouridine biosynthesis bifunctional protein MnmC (647 aa).

A tRNA (mnm(5)s(2)U34)-methyltransferase region spans residues 1-227; the sequence is MLTWKNNLTP…KREMLIGSYS (227 aa). Positions 256 to 647 are FAD-dependent cmnm(5)s(2)U34 oxidoreductase; that stretch reads VGAGIAGTTL…ARFLYRKVRK (392 aa).

The protein in the N-terminal section; belongs to the methyltransferase superfamily. tRNA (mnm(5)s(2)U34)-methyltransferase family. It in the C-terminal section; belongs to the DAO family. FAD serves as cofactor.

The protein localises to the cytoplasm. It catalyses the reaction 5-aminomethyl-2-thiouridine(34) in tRNA + S-adenosyl-L-methionine = 5-methylaminomethyl-2-thiouridine(34) in tRNA + S-adenosyl-L-homocysteine + H(+). Catalyzes the last two steps in the biosynthesis of 5-methylaminomethyl-2-thiouridine (mnm(5)s(2)U) at the wobble position (U34) in tRNA. Catalyzes the FAD-dependent demodification of cmnm(5)s(2)U34 to nm(5)s(2)U34, followed by the transfer of a methyl group from S-adenosyl-L-methionine to nm(5)s(2)U34, to form mnm(5)s(2)U34. The chain is tRNA 5-methylaminomethyl-2-thiouridine biosynthesis bifunctional protein MnmC from Leptospira interrogans serogroup Icterohaemorrhagiae serovar copenhageni (strain Fiocruz L1-130).